The sequence spans 362 residues: Severin (362 aa).

A Gelsolin-like 1 repeat occupies 53-102 (FKVVPVPESSYGKFYDGDSYIILHTFKEGNSLKHDIHFFLGTFTTQDEAG). 162 to 170 (RLLHISGDK) contributes to the a 1,2-diacyl-sn-glycero-3-phospho-(1D-myo-inositol-4,5-bisphosphate) binding site. Gelsolin-like repeat units lie at residues 172 to 212 (AKVA…QEKN) and 280 to 323 (LKFS…NEKK).

This sequence belongs to the villin/gelsolin family.

In terms of biological role, severin blocks the ends of F-actin and causes the fragmentation and depolymerization of actin filaments in a Ca(2+) dependent manner. This Dictyostelium discoideum (Social amoeba) protein is Severin (sevA).